The following is a 670-amino-acid chain: Probable beta-glucosidase N (670 aa).

The first 21 residues, 1–21, serve as a signal peptide directing secretion; it reads MHSNILPVLTSVATLLGLVQG. Residue N51 is glycosylated (N-linked (GlcNAc...) asparagine). The tract at residues 65 to 87 is disordered; that stretch reads FEPSDGVRSVQGSGKDYDNPAMR. A glycan (N-linked (GlcNAc...) asparagine) is linked at N141. The active site involves D152. N-linked (GlcNAc...) asparagine glycosylation is found at N184, N248, N330, and N417.

Belongs to the glycosyl hydrolase 3 family.

The protein resides in the secreted. It catalyses the reaction Hydrolysis of terminal, non-reducing beta-D-glucosyl residues with release of beta-D-glucose.. It participates in glycan metabolism; cellulose degradation. Functionally, beta-glucosidases are one of a number of cellulolytic enzymes involved in the degradation of cellulosic biomass. Catalyzes the last step releasing glucose from the inhibitory cellobiose. This is Probable beta-glucosidase N (bglN) from Emericella nidulans (strain FGSC A4 / ATCC 38163 / CBS 112.46 / NRRL 194 / M139) (Aspergillus nidulans).